A 260-amino-acid chain; its full sequence is Thiamine thiazole synthase (260 aa).

Residues Ala-36, 55-56, Gly-63, and 154-156 each bind NAD(+); these read EQ and HVD. 2 residues coordinate Fe cation: Asp-156 and His-171. Residue Met-224 participates in NAD(+) binding. Arg-234 provides a ligand contact to glycine.

This sequence belongs to the THI4 family. Homooctamer; tetramer of dimers. The cofactor is Fe(2+).

It catalyses the reaction hydrogen sulfide + glycine + NAD(+) = ADP-5-ethyl-4-methylthiazole-2-carboxylate + nicotinamide + 3 H2O + H(+). It participates in cofactor biosynthesis; thiamine diphosphate biosynthesis. Its function is as follows. Involved in the biosynthesis of the thiazole moiety of thiamine. Catalyzes the conversion of NAD and glycine to adenosine diphosphate 5-(2-hydroxyethyl)-4-methylthiazole-2-carboxylate (ADT), an adenylated thiazole intermediate, using free sulfide as a source of sulfur. The polypeptide is Thiamine thiazole synthase (Methanosarcina barkeri (strain Fusaro / DSM 804)).